The primary structure comprises 55 residues: uncharacterized protein (55 aa).

Residues 27–44 (SFWFILISASSFLIYSLF) form a helical membrane-spanning segment.

Its subcellular location is the membrane. This is an uncharacterized protein from Dictyostelium discoideum (Social amoeba).